The sequence spans 68 residues: Movement protein TGBp3 (68 aa).

Over 1–6 the chain is Lumenal; sequence MFSGKE. Residues 7 to 26 form a helical membrane-spanning segment; the sequence is ITLFALSTLIALIVLNYMSA. The Cytoplasmic portion of the chain corresponds to 27–68; sequence TPNPVCLIELTGHSAVLRGNNCESLTSGVIEALSAHLHGLRN.

Belongs to the Tymovirales TGBp3 protein family.

Its subcellular location is the host endoplasmic reticulum membrane. In terms of biological role, plays a role in viral cell-to-cell propagation, by facilitating genome transport to neighboring plant cells through plasmosdesmata. May induce the formation of granular vesicles derived from the Endoplasmic reticulum, which align on actin filaments. This is Movement protein TGBp3 from Papaya mosaic potexvirus (PMV).